The chain runs to 721 residues: Transcription activator of gluconeogenesis ARB_05058 (721 aa).

The segment covering Met1 to Met34 has biased composition (polar residues). The tract at residues Met1–Lys62 is disordered. Positions Thr40–Arg55 are enriched in basic and acidic residues. Residues Cys65–Cys93 constitute a DNA-binding region (zn(2)-C6 fungal-type). 5 disordered regions span residues Gln128–Ala224, Gly263–Ala300, Ser353–Leu400, Asn533–Ser567, and Gly635–Trp666. Polar residues-rich tracts occupy residues Gly133–Ala213, Pro267–Ile277, Leu287–Ala300, and Met361–Asn379. Composition is skewed to low complexity over residues Ser380 to Gln399 and Gly543 to Ser553. Residues Ala640–Arg661 are compositionally biased toward polar residues.

It belongs to the ERT1/acuK family.

The protein localises to the nucleus. Transcription factor which regulates nonfermentable carbon utilization. Activator of gluconeogenetic genes. This chain is Transcription activator of gluconeogenesis ARB_05058, found in Arthroderma benhamiae (strain ATCC MYA-4681 / CBS 112371) (Trichophyton mentagrophytes).